The sequence spans 291 residues: MAGMKEIRGKIKSVQNTRKITKAMEMVAASKMRRAQERMRAARPYADKVRAIAAHMSRANPEYRHPFMVANDGATTAGIILVTTDKGLCGGLNTNVLRATVQKFKELEEKGQKVEATAIGSKGLGFLNRFGAKVMSQVVHLGDTPHLDKLIGAVKTQLDLYSEGKLSAVYIAYTRFVNTMKQEAVIEQLLPLSSEHFEADDGTPATSWDYIYEPDAQAVVDELLVRYVEALVYQAVAENMASEQSARMVAMKAASDNAKTVISELQLVYNKSRQAAITKELSEIVGGAAAV.

Belongs to the ATPase gamma chain family. In terms of assembly, F-type ATPases have 2 components, CF(1) - the catalytic core - and CF(0) - the membrane proton channel. CF(1) has five subunits: alpha(3), beta(3), gamma(1), delta(1), epsilon(1). CF(0) has three main subunits: a, b and c.

The protein resides in the cell inner membrane. In terms of biological role, produces ATP from ADP in the presence of a proton gradient across the membrane. The gamma chain is believed to be important in regulating ATPase activity and the flow of protons through the CF(0) complex. This Burkholderia ambifaria (strain MC40-6) protein is ATP synthase gamma chain.